Here is a 553-residue protein sequence, read N- to C-terminus: Capsid protein VP1 (553 aa).

Belongs to the microviridae F protein family.

The protein localises to the virion. It localises to the host cytoplasm. Functionally, assembles to form an icosahedral capsid with a T=1 symmetry. In Spiroplasma virus 4 (SpV4), this protein is Capsid protein VP1.